The chain runs to 392 residues: Succinyl-diaminopimelate desuccinylase (392 aa).

Histidine 77 serves as a coordination point for Zn(2+). Aspartate 79 is a catalytic residue. Aspartate 110 contributes to the Zn(2+) binding site. Glutamate 144 functions as the Proton acceptor in the catalytic mechanism. Residues glutamate 145, glutamate 173, and histidine 359 each coordinate Zn(2+).

This sequence belongs to the peptidase M20A family. DapE subfamily. Homodimer. The cofactor is Zn(2+). Requires Co(2+) as cofactor.

It carries out the reaction N-succinyl-(2S,6S)-2,6-diaminopimelate + H2O = (2S,6S)-2,6-diaminopimelate + succinate. It participates in amino-acid biosynthesis; L-lysine biosynthesis via DAP pathway; LL-2,6-diaminopimelate from (S)-tetrahydrodipicolinate (succinylase route): step 3/3. Its function is as follows. Catalyzes the hydrolysis of N-succinyl-L,L-diaminopimelic acid (SDAP), forming succinate and LL-2,6-diaminopimelate (DAP), an intermediate involved in the bacterial biosynthesis of lysine and meso-diaminopimelic acid, an essential component of bacterial cell walls. The chain is Succinyl-diaminopimelate desuccinylase from Thiobacillus denitrificans (strain ATCC 25259 / T1).